A 201-amino-acid polypeptide reads, in one-letter code: Proteasome subunit beta type-2 (201 aa).

An N-acetylmethionine modification is found at methionine 1.

Belongs to the peptidase T1B family. As to quaternary structure, the 26S proteasome consists of a 20S proteasome core and two 19S regulatory subunits. The 20S proteasome core is a barrel-shaped complex made of 28 subunits that are arranged in four stacked rings. The two outer rings are each formed by seven alpha subunits, and the two inner rings are formed by seven beta subunits. The proteolytic activity is exerted by three beta-subunits PSMB5, PSMB6 and PSMB7.

It localises to the cytoplasm. The protein localises to the nucleus. Non-catalytic component of the 20S core proteasome complex involved in the proteolytic degradation of most intracellular proteins. This complex plays numerous essential roles within the cell by associating with different regulatory particles. Associated with two 19S regulatory particles, forms the 26S proteasome and thus participates in the ATP-dependent degradation of ubiquitinated proteins. The 26S proteasome plays a key role in the maintenance of protein homeostasis by removing misfolded or damaged proteins that could impair cellular functions, and by removing proteins whose functions are no longer required. Associated with the PA200 or PA28, the 20S proteasome mediates ubiquitin-independent protein degradation. This type of proteolysis is required in several pathways including spermatogenesis (20S-PA200 complex) or generation of a subset of MHC class I-presented antigenic peptides (20S-PA28 complex). This is Proteasome subunit beta type-2 (PSMB2) from Bos taurus (Bovine).